A 448-amino-acid chain; its full sequence is Tubulin beta-1 chain (448 aa).

Glutamine 11, glutamate 69, serine 138, glycine 142, threonine 143, glycine 144, asparagine 204, and asparagine 226 together coordinate GTP. Residue glutamate 69 coordinates Mg(2+). The segment at 428-448 is disordered; it reads AGIGDDEEEDEEGVMGEEIDA. The segment covering 430 to 448 has biased composition (acidic residues); sequence IGDDEEEDEEGVMGEEIDA.

This sequence belongs to the tubulin family. In terms of assembly, dimer of alpha and beta chains. A typical microtubule is a hollow water-filled tube with an outer diameter of 25 nm and an inner diameter of 15 nM. Alpha-beta heterodimers associate head-to-tail to form protofilaments running lengthwise along the microtubule wall with the beta-tubulin subunit facing the microtubule plus end conferring a structural polarity. Microtubules usually have 13 protofilaments but different protofilament numbers can be found in some organisms and specialized cells. Mg(2+) serves as cofactor.

It localises to the cytoplasm. It is found in the cytoskeleton. Tubulin is the major constituent of microtubules, a cylinder consisting of laterally associated linear protofilaments composed of alpha- and beta-tubulin heterodimers. Microtubules grow by the addition of GTP-tubulin dimers to the microtubule end, where a stabilizing cap forms. Below the cap, tubulin dimers are in GDP-bound state, owing to GTPase activity of alpha-tubulin. This chain is Tubulin beta-1 chain (TUB-1), found in Echinococcus multilocularis (Fox tapeworm).